The sequence spans 490 residues: Aspartyl/glutamyl-tRNA(Asn/Gln) amidotransferase subunit B (490 aa).

This sequence belongs to the GatB/GatE family. GatB subfamily. Heterotrimer of A, B and C subunits.

The catalysed reaction is L-glutamyl-tRNA(Gln) + L-glutamine + ATP + H2O = L-glutaminyl-tRNA(Gln) + L-glutamate + ADP + phosphate + H(+). It catalyses the reaction L-aspartyl-tRNA(Asn) + L-glutamine + ATP + H2O = L-asparaginyl-tRNA(Asn) + L-glutamate + ADP + phosphate + 2 H(+). Allows the formation of correctly charged Asn-tRNA(Asn) or Gln-tRNA(Gln) through the transamidation of misacylated Asp-tRNA(Asn) or Glu-tRNA(Gln) in organisms which lack either or both of asparaginyl-tRNA or glutaminyl-tRNA synthetases. The reaction takes place in the presence of glutamine and ATP through an activated phospho-Asp-tRNA(Asn) or phospho-Glu-tRNA(Gln). The chain is Aspartyl/glutamyl-tRNA(Asn/Gln) amidotransferase subunit B from Methylorubrum extorquens (strain CM4 / NCIMB 13688) (Methylobacterium extorquens).